A 190-amino-acid polypeptide reads, in one-letter code: Translation machinery-associated protein 22 (190 aa).

The interval 63 to 83 is disordered; that stretch reads LNVSGTKDSNAEEQPAKLTKE. The region spanning 99–170 is the SUI1 domain; sequence VLIKTIERTK…DIFDFILEKF (72 aa).

The protein belongs to the DENR family. Interacts with the 40S ribosomal subunit.

It localises to the cytoplasm. This is Translation machinery-associated protein 22 (tma22) from Schizosaccharomyces pombe (strain 972 / ATCC 24843) (Fission yeast).